The following is a 586-amino-acid chain: MNKLRQKYLQKWLRAQQEPIKKLMRANIVLATLSSFILVAQTYFLATLLDKLIMQNVPRDELIPYFLGLIIGFGMRAIILWAREKIGFQSGQLLRNHIRQKILDKIHLVGPATINQKPAGSWASIMLEQVENLHNFYARFLPQQSLSAIVPVVIFIAVFPLNWAAGLILMITAPLVPLFMIIVGIAAADNSQKNMDTLSRLSAQFLDRLRGLETLRLFNRTSEQTEHIENATEDFRETTMDVLKLAFLSSAVLEFFTSISIALMAVYFGFSYLGQIEFGTYNAPLTLFTGFFCLILAPEFYQPLRDLGTYYHDRAAGIGAADAIVDFLESDYLTVHQNEKTISLESAVEISAENLVVLSTQGSALTKPLNFQIPANHNVALVGQSGAGKTSLMNVILGFLPYEGSLKINGQELRESNLADWRKHIAWVGQNPLLLQGTIKENLLLGDVQANDEEINQALMRSQAKEFTDKLGLHHEIKDGGLGISVGQAQRLAIARALLRKGDLLLLDEPTASLDAQSENLVLQALNEASQHQTTLMITHRIEDLKQCDQIFVMQRGEIVQQGKFTELQHEGFFAELLAQRQQDIQ.

The next 6 helical transmembrane spans lie at 28-48 (IVLA…LATL), 62-82 (LIPY…ILWA), 146-166 (LSAI…WAAG), 167-187 (LILM…GIAA), 250-270 (SAVL…YFGF), and 278-298 (FGTY…ILAP). In terms of domain architecture, ABC transmembrane type-1 spans 28 to 316 (IVLATLSSFI…LGTYYHDRAA (289 aa)). The ABC transporter domain occupies 350–581 (ISAENLVVLS…GFFAELLAQR (232 aa)). ATP is bound at residue 383 to 390 (GQSGAGKT).

This sequence belongs to the ABC transporter superfamily. Cysteine exporter (TC 3.A.1.129.1) family. Forms a heterodimer with CydC.

The protein resides in the cell inner membrane. The catalysed reaction is L-cysteine(in) + ATP + H2O = L-cysteine(out) + ADP + phosphate + H(+). It catalyses the reaction glutathione(in) + ATP + H2O = glutathione(out) + ADP + phosphate + H(+). In terms of biological role, part of the ABC transporter complex CydDC that exports the reduced low-molecular-weight thiols cysteine and glutathione to the periplasm. Export of these thiol-containing redox-active molecules may be crucial for redox homeostasis in the periplasm, permitting correct assembly of various respiratory complexes and formation of correct disulfide bonds in periplasmic and secreted proteins. CydD contains transmembrane domains (TMD), which form a pore in the inner membrane, and an ATP-binding domain (NBD), which is responsible for energy generation. Required for the assembly of functional cytochrome bd-type quinol oxidases and periplasmic c-type cytochromes. This Haemophilus influenzae (strain ATCC 51907 / DSM 11121 / KW20 / Rd) protein is Glutathione/L-cysteine transport system ATP-binding/permease protein CydD (cydD).